The primary structure comprises 208 residues: Thiamine-phosphate synthase (208 aa).

4-amino-2-methyl-5-(diphosphooxymethyl)pyrimidine is bound by residues 38–42 (QYRSK) and N70. Residues D71 and D90 each contribute to the Mg(2+) site. Position 109 (T109) interacts with 4-amino-2-methyl-5-(diphosphooxymethyl)pyrimidine. 136 to 138 (SAT) is a binding site for 2-[(2R,5Z)-2-carboxy-4-methylthiazol-5(2H)-ylidene]ethyl phosphate. 4-amino-2-methyl-5-(diphosphooxymethyl)pyrimidine is bound at residue K139. Residues G166 and 186–187 (VS) each bind 2-[(2R,5Z)-2-carboxy-4-methylthiazol-5(2H)-ylidene]ethyl phosphate.

This sequence belongs to the thiamine-phosphate synthase family. It depends on Mg(2+) as a cofactor.

It catalyses the reaction 2-[(2R,5Z)-2-carboxy-4-methylthiazol-5(2H)-ylidene]ethyl phosphate + 4-amino-2-methyl-5-(diphosphooxymethyl)pyrimidine + 2 H(+) = thiamine phosphate + CO2 + diphosphate. The enzyme catalyses 2-(2-carboxy-4-methylthiazol-5-yl)ethyl phosphate + 4-amino-2-methyl-5-(diphosphooxymethyl)pyrimidine + 2 H(+) = thiamine phosphate + CO2 + diphosphate. The catalysed reaction is 4-methyl-5-(2-phosphooxyethyl)-thiazole + 4-amino-2-methyl-5-(diphosphooxymethyl)pyrimidine + H(+) = thiamine phosphate + diphosphate. Its pathway is cofactor biosynthesis; thiamine diphosphate biosynthesis; thiamine phosphate from 4-amino-2-methyl-5-diphosphomethylpyrimidine and 4-methyl-5-(2-phosphoethyl)-thiazole: step 1/1. Its function is as follows. Condenses 4-methyl-5-(beta-hydroxyethyl)thiazole monophosphate (THZ-P) and 2-methyl-4-amino-5-hydroxymethyl pyrimidine pyrophosphate (HMP-PP) to form thiamine monophosphate (TMP). In Aromatoleum aromaticum (strain DSM 19018 / LMG 30748 / EbN1) (Azoarcus sp. (strain EbN1)), this protein is Thiamine-phosphate synthase.